Here is a 755-residue protein sequence, read N- to C-terminus: Cartilage oligomeric matrix protein (755 aa).

The signal sequence occupies residues 1–19 (MSPTACVLVLALAALRATG). The tract at residues 21-84 (GQIPLGGDLA…PARTPGLSVR (64 aa)) is COMP N-terminal. An EGF-like 1 domain is found at 85–124 (PVALCAPGSCFPGVVCTETATGARCGPCPPGYTGNGSHCT). 21 disulfides stabilise this stretch: cysteine 89–cysteine 100, cysteine 94–cysteine 109, cysteine 112–cysteine 123, cysteine 129–cysteine 140, cysteine 134–cysteine 149, cysteine 152–cysteine 176, cysteine 182–cysteine 195, cysteine 189–cysteine 204, cysteine 207–cysteine 219, cysteine 227–cysteine 241, cysteine 235–cysteine 251, cysteine 253–cysteine 264, cysteine 280–cysteine 285, cysteine 290–cysteine 310, cysteine 326–cysteine 346, cysteine 349–cysteine 369, cysteine 385–cysteine 405, cysteine 408–cysteine 428, cysteine 446–cysteine 466, cysteine 482–cysteine 502, and cysteine 518–cysteine 739. The N-linked (GlcNAc...) asparagine glycan is linked to asparagine 119. Residues 125 to 177 (DVNECNAHPCFPRVRCINTSPGFHCEACPPGFSGPTHEGVGLTFAKTNKQVCT) form the EGF-like 2; calcium-binding domain. Positions 178-220 (DINECETGQHNCVPNSVCVNTRGSFQCGPCQPGFVGDQRSGCQ) constitute an EGF-like 3; calcium-binding domain. Positions 223 to 265 (GQHFCPDGSPSPCHEKADCILERDGSRSCVCAVGWAGNGLLCG) constitute an EGF-like 4 domain. TSP type-3 repeat units lie at residues 266–298 (RDTDLDGFPDEKLRCSERQCRKDNCVTVPNSGQ), 299–334 (EDVDRDRIGDACDPDADGDGVPNEQDNCPLVRNPDQ), 335–357 (RNSDKDKWGDACDNCRSQKNDDQ), 358–393 (KDTDRDGQGDACDDDIDGDRIRNVADNCPRVPNFDQ), 394–416 (SDSDGDGVGDACDNCPQKDNPDQ), 417–454 (RDVDHDFVGDACDSDQDQDGDGHQDSRDNCPTVPNSAQ), 455–490 (QDSDHDGKGDACDDDDDNDGVPDSRDNCRLVPNPGQ), and 491–526 (EDNDRDGVGDACQGDFDADKVIDKIDVCPENAEVTL). The segment at 295–501 (NSGQEDVDRD…DNDRDGVGDA (207 aa)) is disordered. Basic and acidic residues-rich tracts occupy residues 332–344 (PDQRNSDKDKWGD) and 350–365 (RSQKNDDQKDTDRDGQ). Serine 394 carries the post-translational modification Phosphoserine. 2 stretches are compositionally biased toward basic and acidic residues: residues 412-424 (DNPDQRDVDHDFV) and 456-465 (DSDHDGKGDA). The segment at 525 to 755 (TLTDFRAFQT…DYERHRLRRA (231 aa)) is mediates cell survival and induction of the IAP family of survival proteins. The 215-residue stretch at 530 to 744 (RAFQTVVLDP…LRYRCNDTIP (215 aa)) folds into the TSP C-terminal domain. N-linked (GlcNAc...) asparagine glycosylation occurs at asparagine 740.

The protein belongs to the thrombospondin family. Pentamer; disulfide-linked. Exists in a more compact conformation in the presence of calcium and shows a more extended conformation in the absence of calcium. Interacts with ITGB3, ITGA5 and FN1. Binding to FN1 requires the presence of divalent cations (Ca(2+), Mg(2+) or Mn(2+)). The greatest amount of binding is seen in the presence of Mn(2+). Interacts with MATN1, MATN3, MATN4 and ACAN. Binds heparin, heparan sulfate and chondroitin sulfate. EDTA dimishes significantly its binding to ACAN and abolishes its binding to MATN3, MATN4 and chondroitin sulfate. Interacts with collagen I, II and IX, and interaction with these collagens is dependent on the presence of zinc ions. Interacts with ADAMTS12. Interacts with ITGA7. Ca(2+) is required as a cofactor. In terms of processing, proteolytically cleaved by metalloproteases ADAMTS4 and ADAMTS1 with ADAMTS4 showing more potent activity.

It is found in the secreted. It localises to the extracellular space. The protein localises to the extracellular matrix. Plays a role in the structural integrity of cartilage via its interaction with other extracellular matrix proteins such as the collagens and fibronectin. Can mediate the interaction of chondrocytes with the cartilage extracellular matrix through interaction with cell surface integrin receptors. Could play a role in the pathogenesis of osteoarthritis. Potent suppressor of apoptosis in both primary chondrocytes and transformed cells. Suppresses apoptosis by blocking the activation of caspase-3 and by inducing the IAP family of survival proteins (BIRC3, BIRC2, BIRC5 and XIAP). Essential for maintaining a vascular smooth muscle cells (VSMCs) contractile/differentiated phenotype under physiological and pathological stimuli. Maintains this phenotype of VSMCs by interacting with ITGA7. The chain is Cartilage oligomeric matrix protein from Rattus norvegicus (Rat).